A 941-amino-acid chain; its full sequence is MASNNVAQFATELKMPADVLLTQLRDAGVEKSSTSDELSKADKDKLLEHLRRAHGVAPDGEKKKITLMRKETTEIKQADATGKSRTIQVEVRKKRTFVKRDEPAAEEAPVVVAAPIIDAAEVERRAEESRRHAELMARQEADLREKQERLAKLEAEKETQAKALKKAEVDAQKAEVDAQKAEAEKPVEVKADESAIEEKKRVAAEESKKKAAAAAKEAAKEANEKAAATELARKVVADEVAQIKAMMNAPRRAIKAPEPVAPVAKPAAEGTLHKPADKKPGEKKDEKKPAVTADKKSIKSANVSSTWQDDAKKRSAGIKTRGNTGGGRDGWRAGTKGRRQSHHDDRESNFQAPTEAVVKDVQVPETITVAELAHKMSVKASEVIKQLMKLGQMCTINQVLDQETAMILVEEMGHVAHAAKLDDPEALLEIGAEQADVEALPRAPVVTVMGHVDHGKTSLLDYIRRAKVATGEAGGITQHIGAYHVETPRGMITFLDTPGHEAFTAMRARGAKATDIVILVVAADDGVMPQTKEAIAHAKAAGVPLVVAINKIDKPSANLDRVKQELIAEQVVPEEYGGDSPFVPVSAKTGEGIDALLEQVLLQAEVLELKAPVVSPARGLVVEAKLDKGRGPVATILVQSGTLRRGDVVLAGSAYGRVRAMLDENGKSISEAGPSIPVEIQGLTEVPNAGEEVMVMADERKAREIGLFRQGKFRDVKLAKQQAAKLENMFENMGEGEVKNLPMIIKTDVQGSQEALVGSLQKLSTGEVRVQVVHAAVGGISESDVNLAVASKAVIIGFNTRADASARKLAEANGVDIRYYNIIYDAVDEIKAAMSGMLSPEKREQALGLVEIRQVILVSKVGAIAGCYVLEGVVKRGASVRLLRDNVVIWTGELDSLKRFKDDAKEVKFGFECGLTLKNFNDIKEGDQLEVFEVQEIARTL.

Residues 170 to 209 (DAQKAEVDAQKAEAEKPVEVKADESAIEEKKRVAAEESKK) show a composition bias toward basic and acidic residues. Disordered stretches follow at residues 170 to 228 (DAQK…KAAA) and 252 to 351 (RAIK…SNFQ). Low complexity predominate over residues 256–269 (APEPVAPVAKPAAE). The segment covering 271-297 (TLHKPADKKPGEKKDEKKPAVTADKKS) has biased composition (basic and acidic residues). Over residues 299-308 (KSANVSSTWQ) the composition is skewed to polar residues. The tr-type G domain maps to 441-610 (PRAPVVTVMG…LLQAEVLELK (170 aa)). Residues 450-457 (GHVDHGKT) form a G1 region. GTP is bound at residue 450 to 457 (GHVDHGKT). The tract at residues 475–479 (GITQH) is G2. Positions 496–499 (DTPG) are G3. GTP contacts are provided by residues 496–500 (DTPGH) and 550–553 (NKID). The G4 stretch occupies residues 550 to 553 (NKID). A G5 region spans residues 586–588 (SAK).

This sequence belongs to the TRAFAC class translation factor GTPase superfamily. Classic translation factor GTPase family. IF-2 subfamily.

It is found in the cytoplasm. In terms of biological role, one of the essential components for the initiation of protein synthesis. Protects formylmethionyl-tRNA from spontaneous hydrolysis and promotes its binding to the 30S ribosomal subunits. Also involved in the hydrolysis of GTP during the formation of the 70S ribosomal complex. This Herminiimonas arsenicoxydans protein is Translation initiation factor IF-2.